Reading from the N-terminus, the 352-residue chain is Uroporphyrinogen decarboxylase (352 aa).

Residues 26–30 (RQAGR), aspartate 76, tyrosine 153, serine 208, and histidine 323 contribute to the substrate site.

This sequence belongs to the uroporphyrinogen decarboxylase family. Homodimer.

The protein resides in the cytoplasm. The enzyme catalyses uroporphyrinogen III + 4 H(+) = coproporphyrinogen III + 4 CO2. It functions in the pathway porphyrin-containing compound metabolism; protoporphyrin-IX biosynthesis; coproporphyrinogen-III from 5-aminolevulinate: step 4/4. Functionally, catalyzes the decarboxylation of four acetate groups of uroporphyrinogen-III to yield coproporphyrinogen-III. The chain is Uroporphyrinogen decarboxylase from Prochlorococcus marinus (strain MIT 9303).